A 63-amino-acid polypeptide reads, in one-letter code: Crotasin (63 aa).

The first 22 residues, 1-22 (MKILYLLSAFLFLAFLSESGNA), serve as a signal peptide directing secretion. Intrachain disulfides connect cysteine 26/cysteine 56, cysteine 33/cysteine 50, and cysteine 38/cysteine 57.

As to expression, highly expressed in pancreas, heart, liver, brain and kidney. Expressed to a low extent in the venom gland.

Its subcellular location is the secreted. The protein is Crotasin of Crotalus durissus terrificus (South American rattlesnake).